Here is a 388-residue protein sequence, read N- to C-terminus: Na(+)/H(+) antiporter NhaA (388 aa).

Residues 1–11 (MKHLHRFFSSD) are Cytoplasmic-facing. The helical transmembrane segment at 12-31 (ASGGIILIIAAILAMIMANS) threads the bilayer. Topologically, residues 32–58 (GATSGWYHDFLETPVQLRVGSLEINKN) are periplasmic. The tract at residues 45 to 58 (PVQLRVGSLEINKN) is important for dimerization. Residues 59–80 (MLLWINDALMAVFFLLVGLEVK) form a helical membrane-spanning segment. Residues 81–96 (RELMQGSLASLRQAAF) are Cytoplasmic-facing. A helical membrane pass occupies residues 97-116 (PVIAAIGGMIVPALLYLAFN). Topologically, residues 117-122 (YADPIT) are periplasmic. A helical membrane pass occupies residues 123–130 (REGWAIPA). Topologically, residues 131–154 (ATDIAFALGVLALLGSRVPLALKI) are cytoplasmic. The chain crosses the membrane as a helical span at residues 155–176 (FLMALAIIDDLGAIIIIALFYT). The Periplasmic segment spans residues 177 to 180 (NDLS). The chain crosses the membrane as a helical span at residues 181–200 (MASLGVAAVAIAVLAVLNLC). Topologically, residues 201-204 (GARR) are cytoplasmic. The helical transmembrane segment at 205 to 222 (TGVYILVGVVLWTAVLKS) threads the bilayer. Residue Gly-223 is a topological domain, periplasmic. The chain crosses the membrane as a helical span at residues 224–236 (VHATLAGVIVGFF). The Cytoplasmic segment spans residues 237-253 (IPLKEKHGRSPAKRLEH). A helical membrane pass occupies residues 254 to 272 (VLHPWVAYLILPLFAFANA). Over 273 to 286 (GVSLQGVTLDGLTS) the chain is Periplasmic. Residues 287 to 310 (ILPLGIIAGLLIGKPLGISLFCWL) traverse the membrane as a helical segment. Topologically, residues 311 to 339 (ALRLKLAHLPEGTTYQQIMVVGILCGIGF) are cytoplasmic. Residues 340-350 (TMSIFIASLAF) traverse the membrane as a helical segment. Residues 351–357 (GSVDPEL) are Periplasmic-facing. Residues 358–380 (INWAKLGILVGSISSAVIGYSWL) form a helical membrane-spanning segment. At 381-388 (RVRLRPSV) the chain is on the cytoplasmic side.

This sequence belongs to the NhaA Na(+)/H(+) (TC 2.A.33) antiporter family. In terms of assembly, monomer. Homodimer. Under routine stress conditions, the monomeric form is fully functional. However, the dimeric form is much more efficient in conferring growth resistance under extreme stress conditions.

It localises to the cell inner membrane. It catalyses the reaction Na(+)(in) + 2 H(+)(out) = Na(+)(out) + 2 H(+)(in). The enzyme catalyses Li(+)(in) + 2 H(+)(out) = Li(+)(out) + 2 H(+)(in). With respect to regulation, activity is regulated by pH. Active at alkaline pH. Activity is strongly down-regulated below pH 6.5 and a dramatic increase in activity is observed upon increase of the pH from 6.5 to 8.5. Na(+)/H(+) antiporter that extrudes sodium in exchange for external protons. Plays an important role in the regulation of intracellular pH, cellular Na(+) content and cell volume. Catalyzes the exchange of 2 H(+) per Na(+). This stoichiometry applies at both neutral and alkaline pH values. In addition, can also transport lithium and is involved in lithium detoxification. Binding of the Li(+) and H(+) ligands to NhaA is coupled and antagonistic. This is Na(+)/H(+) antiporter NhaA from Escherichia coli (strain K12).